The sequence spans 59 residues: Small integral membrane protein 30 (59 aa).

A signal peptide spans Met1–Ala24. Over Val25–Asp29 the chain is Extracellular. A helical transmembrane segment spans residues Ala30–Val50. Residues Tyr51–Met59 are Cytoplasmic-facing.

In terms of assembly, interacts (via transmembrane domain) with antiviral protein MAVS (via transmembrane domain); the interaction disrupts MAVS interaction with RIGI and inhibits MAVS aggregation, resulting in the repression of type I interferon signaling and innate immune responses.

The protein localises to the endoplasmic reticulum membrane. The protein resides in the mitochondrion membrane. In terms of biological role, negatively regulates antiviral innate immune responses. Disrupts the interaction of antiviral protein MAVS with innate immune receptor RIGI and inhibits MAVS aggregation, resulting in the repression of type I interferon signaling and innate immune responses. The protein is Small integral membrane protein 30 of Homo sapiens (Human).